A 212-amino-acid polypeptide reads, in one-letter code: Ribosomal RNA large subunit methyltransferase E (212 aa).

S-adenosyl-L-methionine-binding residues include Gly-57, Trp-59, Asp-77, Asp-93, and Asp-122. The active-site Proton acceptor is the Lys-162.

Belongs to the class I-like SAM-binding methyltransferase superfamily. RNA methyltransferase RlmE family.

It localises to the cytoplasm. It catalyses the reaction uridine(2552) in 23S rRNA + S-adenosyl-L-methionine = 2'-O-methyluridine(2552) in 23S rRNA + S-adenosyl-L-homocysteine + H(+). In terms of biological role, specifically methylates the uridine in position 2552 of 23S rRNA at the 2'-O position of the ribose in the fully assembled 50S ribosomal subunit. The chain is Ribosomal RNA large subunit methyltransferase E from Coxiella burnetii (strain RSA 493 / Nine Mile phase I).